Here is a 1782-residue protein sequence, read N- to C-terminus: Vitellogenin receptor (1782 aa).

Positions Met1–Val18 are cleaved as a signal peptide. Residues Ser19–Asn1663 are Extracellular-facing. LDL-receptor class A domains are found at residues Lys35–Asp72, Thr81–Val118, and Asn122–Lys157. 6 disulfide bridges follow: Cys36/Cys48, Cys43/Cys61, Cys55/Cys71, Cys82/Cys94, Cys89/Cys107, and Cys101/Cys117. N-linked (GlcNAc...) asparagine glycosylation occurs at Asn122. Intrachain disulfides connect Cys123–Cys134, Cys129–Cys147, and Cys141–Cys156. An N-linked (GlcNAc...) asparagine glycan is attached at Asn159. In terms of domain architecture, LDL-receptor class A 4 spans Ser166–Thr205. 3 cysteine pairs are disulfide-bonded: Cys167/Cys181, Cys176/Cys194, and Cys188/Cys204. N-linked (GlcNAc...) asparagine glycans are attached at residues Asn208 and Asn239. The region spanning Asn208–Asn243 is the EGF-like 1 domain. Residues Asp244–Lys283 enclose the EGF-like; calcium-binding domain. Intrachain disulfides connect Cys248/Cys258, Cys254/Cys267, and Cys269/Cys282. LDL-receptor class B repeat units lie at residues Asp327–Thr374, Lys375–Gln416, Gly417–Asn460, Glu461–Gln501, and Asn502–Ala544. Residues Pro552–Gln588 form the EGF-like 2 domain. Asn702, Asn859, Asn896, and Asn923 each carry an N-linked (GlcNAc...) asparagine glycan. The 39-residue stretch at Asp889–Ile927 folds into the EGF-like 3 domain. LDL-receptor class A domains are found at residues Glu931–Arg969, Arg973–Glu1009, Lys1012–Arg1049, Glu1052–Tyr1090, and Ala1094–Leu1131. 15 disulfides stabilise this stretch: Cys932-Cys945, Cys939-Cys958, Cys952-Cys968, Cys974-Cys986, Cys981-Cys999, Cys993-Cys1008, Cys1013-Cys1026, Cys1020-Cys1039, Cys1033-Cys1048, Cys1053-Cys1065, Cys1060-Cys1078, Cys1072-Cys1089, Cys1095-Cys1108, Cys1103-Cys1121, and Cys1115-Cys1130. N-linked (GlcNAc...) asparagine glycans are attached at residues Asn1133 and Asn1140. LDL-receptor class A domains follow at residues Asn1140 to Thr1177, Tyr1178 to Asp1214, and Glu1225 to Gln1260. Intrachain disulfides connect Cys1141–Cys1154, Cys1148–Cys1167, Cys1161–Cys1176, Cys1179–Cys1191, Cys1186–Cys1204, Cys1198–Cys1213, Cys1226–Cys1236, Cys1231–Cys1249, and Cys1243–Cys1259. Asn1175 carries N-linked (GlcNAc...) asparagine glycosylation. An EGF-like 4 domain is found at Ala1262–Glu1298. LDL-receptor class B repeat units follow at residues Asp1385–Thr1425, Arg1471–Lys1518, and Ser1519–Ser1561. N-linked (GlcNAc...) asparagine glycosylation is found at Asn1626, Asn1640, and Asn1656. Residues Ile1664 to Val1684 traverse the membrane as a helical segment. Residues Tyr1685–Lys1782 are Cytoplasmic-facing.

In terms of tissue distribution, expressed in ovaries of reproductive females.

The protein resides in the membrane. Involved in uptake of vitellogenin by endocytosis. Expression is regulated by the juvenile hormone analog, methoprene (in vitro). In Solenopsis invicta (Red imported fire ant), this protein is Vitellogenin receptor.